Consider the following 297-residue polypeptide: ATP synthase F(1) complex subunit gamma, mitochondrial (297 aa).

The transit peptide at 1–25 directs the protein to the mitochondrion; the sequence is MFSRAGVAGLSAWTLQPQWIQVRNM. Lysine 39 carries the post-translational modification N6-acetyllysine. N6-succinyllysine is present on lysine 49. At lysine 55 the chain carries N6-acetyllysine. The residue at position 115 (lysine 115) is an N6-acetyllysine; alternate. Lysine 115 carries the post-translational modification N6-succinyllysine; alternate. Serine 146 is modified (phosphoserine). The residue at position 154 (lysine 154) is an N6-acetyllysine; alternate. Lysine 154 is modified (N6-succinyllysine; alternate). At lysine 197 the chain carries N6-acetyllysine. An N6-succinyllysine modification is found at lysine 270.

It belongs to the ATPase gamma chain family. As to quaternary structure, component of the ATP synthase complex composed at least of ATP5F1A/subunit alpha, ATP5F1B/subunit beta, ATP5MC1/subunit c (homooctomer), MT-ATP6/subunit a, MT-ATP8/subunit 8, ATP5ME/subunit e, ATP5MF/subunit f, ATP5MG/subunit g, ATP5MK/subunit k, ATP5MJ/subunit j, ATP5F1C/subunit gamma, ATP5F1D/subunit delta, ATP5F1E/subunit epsilon, ATP5PF/subunit F6, ATP5PB/subunit b, ATP5PD/subunit d, ATP5PO/subunit OSCP. ATP synthase complex consists of a soluble F(1) head domain (subunits alpha(3) and beta(3)) - the catalytic core - and a membrane F(0) domain - the membrane proton channel (subunits c, a, 8, e, f, g, k and j). These two domains are linked by a central stalk (subunits gamma, delta, and epsilon) rotating inside the F1 region and a stationary peripheral stalk (subunits F6, b, d, and OSCP). Interacts with FLVCR2; this interaction occurs in the absence of heme and is disrupted upon heme binding.

The protein localises to the mitochondrion inner membrane. Subunit gamma, of the mitochondrial membrane ATP synthase complex (F(1)F(0) ATP synthase or Complex V) that produces ATP from ADP in the presence of a proton gradient across the membrane which is generated by electron transport complexes of the respiratory chain. ATP synthase complex consist of a soluble F(1) head domain - the catalytic core - and a membrane F(1) domain - the membrane proton channel. These two domains are linked by a central stalk rotating inside the F(1) region and a stationary peripheral stalk. During catalysis, ATP synthesis in the catalytic domain of F(1) is coupled via a rotary mechanism of the central stalk subunits to proton translocation. In vivo, can only synthesize ATP although its ATP hydrolase activity can be activated artificially in vitro. With the central stalk subunit delta, is essential for the biogenesis of F(1) catalytic part of the ATP synthase complex namely in the formation of F1 assembly intermediate. This chain is ATP synthase F(1) complex subunit gamma, mitochondrial, found in Pongo abelii (Sumatran orangutan).